The sequence spans 247 residues: Carboxy-S-adenosyl-L-methionine synthase (247 aa).

S-adenosyl-L-methionine-binding positions include Tyr39, 64–66 (GCS), 117–118 (DI), Asn132, and Arg199.

This sequence belongs to the class I-like SAM-binding methyltransferase superfamily. Cx-SAM synthase family. Homodimer.

The catalysed reaction is prephenate + S-adenosyl-L-methionine = carboxy-S-adenosyl-L-methionine + 3-phenylpyruvate + H2O. Catalyzes the conversion of S-adenosyl-L-methionine (SAM) to carboxy-S-adenosyl-L-methionine (Cx-SAM). In Aeromonas salmonicida (strain A449), this protein is Carboxy-S-adenosyl-L-methionine synthase.